Consider the following 382-residue polypeptide: 8-amino-7-oxononanoate synthase (382 aa).

Residues Arg22 and Arg29 each contribute to the substrate site. Residue 109–110 (GF) coordinates pyridoxal 5'-phosphate. His134 contributes to the substrate binding site. Residues Ser182, 207–210 (DDAH), and 233–236 (TLSK) contribute to the pyridoxal 5'-phosphate site. Lys236 bears the N6-(pyridoxal phosphate)lysine mark. Thr345 contacts substrate.

The protein belongs to the class-II pyridoxal-phosphate-dependent aminotransferase family. BioF subfamily. As to quaternary structure, homodimer. It depends on pyridoxal 5'-phosphate as a cofactor.

It catalyses the reaction 6-carboxyhexanoyl-[ACP] + L-alanine + H(+) = (8S)-8-amino-7-oxononanoate + holo-[ACP] + CO2. The protein operates within cofactor biosynthesis; biotin biosynthesis. Catalyzes the decarboxylative condensation of pimeloyl-[acyl-carrier protein] and L-alanine to produce 8-amino-7-oxononanoate (AON), [acyl-carrier protein], and carbon dioxide. The chain is 8-amino-7-oxononanoate synthase from Granulibacter bethesdensis (strain ATCC BAA-1260 / CGDNIH1).